A 229-amino-acid chain; its full sequence is Heptaprenylglyceryl phosphate synthase (229 aa).

Residue lysine 12 participates in sn-glycerol 1-phosphate binding. Aspartate 14 and serine 40 together coordinate Mg(2+). Sn-glycerol 1-phosphate is bound by residues 159–164, glycine 189, and 209–210; these read YLEYSG and GN.

The protein belongs to the GGGP/HepGP synthase family. Group I subfamily. Homodimer. It depends on Mg(2+) as a cofactor.

It carries out the reaction sn-glycerol 1-phosphate + all-trans-heptaprenyl diphosphate = 3-heptaprenyl-sn-glycero-1-phosphate + diphosphate. It functions in the pathway membrane lipid metabolism; glycerophospholipid metabolism. In terms of biological role, prenyltransferase that catalyzes in vivo the transfer of the heptaprenyl moiety of heptaprenyl pyrophosphate (HepPP; 35 carbon atoms) to the C3 hydroxyl of sn-glycerol-1-phosphate (G1P), producing heptaprenylglyceryl phosphate (HepGP). This reaction is an ether-bond-formation step in the biosynthesis of archaea-type G1P-based membrane lipids found in Bacillales. This is Heptaprenylglyceryl phosphate synthase from Bacillus cereus (strain B4264).